The primary structure comprises 465 residues: MESLRIYNTLARDKQVFVPRQPGEVRMYVCGITVYDYCHVGHARMLVVFDLVQRWLRAIGYRVTYVRNITDVDDKIIRRAVENGESIKSLTDRFIGAMHDDEAALGIQRPDIEPRATQFIPQMLGMIEQLEANGYAYQASDGDVNYSVRKFANYGKLSGKSLDDLRAGERVAANDAKEDPLDFVLWKRAKAEDPEGASWASKYGMGRPGWHIECSAMGCTLLGEHFDIHGGGQDLQFPHHENEIAQSEGATGQTFVNYWMHNGFVQVDNEKMSKSLGNFFTIREVLERYDAEVMRFFIVRTHYRSPLNYSDVHLDDARASLTRLYTALKDVEPDALALDWNEPYAQRFAAAMNDDINTPVAVATLFELAGEVNRTRDASLARQLKQLAGLLGLLGREPRAFLQQGAGSAHAGALAADEIEARIAARVAAKQAKDYAEADRIRAELLEAGIALEDKPGGSTEWRRV.

Residue C30 coordinates Zn(2+). Positions 32–42 match the 'HIGH' region motif; that stretch reads ITVYDYCHVGH. Zn(2+) contacts are provided by C214, H239, and E243. Positions 271 to 275 match the 'KMSKS' region motif; that stretch reads KMSKS. Residue K274 participates in ATP binding.

This sequence belongs to the class-I aminoacyl-tRNA synthetase family. In terms of assembly, monomer. Zn(2+) serves as cofactor.

The protein localises to the cytoplasm. The catalysed reaction is tRNA(Cys) + L-cysteine + ATP = L-cysteinyl-tRNA(Cys) + AMP + diphosphate. This chain is Cysteine--tRNA ligase, found in Burkholderia vietnamiensis (strain G4 / LMG 22486) (Burkholderia cepacia (strain R1808)).